The primary structure comprises 345 residues: Green-sensitive opsin (345 aa).

At 1–37 (MENGTEGKNFYIPMNNRTGLVRSPYEYPQYYLADPWQ) the chain is on the extracellular side. Residues asparagine 3 and asparagine 16 are each glycosylated (N-linked (GlcNAc...) asparagine). The chain crosses the membrane as a helical span at residues 38–62 (FKLLGIYMFFLILTGFPINALTLVV). Topologically, residues 63-74 (TAQNKKLRQPLN) are cytoplasmic. Residues 75-100 (FILVNLAVAGLIMVCFGFTVCIYSCM) traverse the membrane as a helical segment. The Extracellular portion of the chain corresponds to 101-114 (VGYFSLGPLGCTIE). Cysteine 111 and cysteine 188 are joined by a disulfide. The chain crosses the membrane as a helical span at residues 115–134 (GFMATLGGQVSLWSLVVLAI). Over 135 to 153 (ERYIVVCKPMGSFKFTATH) the chain is Cytoplasmic. Residues 154–177 (SAAGCAFTWIMASSCAVPPLVGWS) form a helical membrane-spanning segment. Residues 178–203 (RYIPEGIQVSCGPDYYTLAPGFNNES) are Extracellular-facing. An N-linked (GlcNAc...) asparagine glycan is attached at asparagine 201. The chain crosses the membrane as a helical span at residues 204-231 (FVMYMFSCHFCVPVFTIFFTYGSLVMTV). Residues 232–253 (KAAAAQQQDSASTQKAEKEVTR) are Cytoplasmic-facing. Residues 254 to 277 (MCFLMVLGFLLAWVPYASYAAWIF) traverse the membrane as a helical segment. The Extracellular portion of the chain corresponds to 278–285 (FNRGAAFS). The helical transmembrane segment at 286–310 (AMSMAIPSFFSKSSALFNPIIYILL) threads the bilayer. Residue lysine 297 is modified to N6-(retinylidene)lysine. The Cytoplasmic segment spans residues 311-345 (NKQFRNCMLATIGMGGMVEDETSVSTSKTEVSTAA).

It belongs to the G-protein coupled receptor 1 family. Opsin subfamily. In terms of processing, phosphorylated on some or all of the serine and threonine residues present in the C-terminal region. In terms of tissue distribution, the color pigments are found in the cone photoreceptor cells.

The protein resides in the membrane. In terms of biological role, visual pigments are the light-absorbing molecules that mediate vision. They consist of an apoprotein, opsin, covalently linked to cis-retinal. The polypeptide is Green-sensitive opsin (Oryzias latipes (Japanese rice fish)).